A 106-amino-acid polypeptide reads, in one-letter code: Integration host factor subunit alpha (106 aa).

Belongs to the bacterial histone-like protein family. Heterodimer of an alpha and a beta chain.

In terms of biological role, this protein is one of the two subunits of integration host factor, a specific DNA-binding protein that functions in genetic recombination as well as in transcriptional and translational control. In Paramagnetospirillum magneticum (strain ATCC 700264 / AMB-1) (Magnetospirillum magneticum), this protein is Integration host factor subunit alpha.